The primary structure comprises 249 residues: DNA repair protein RecO (249 aa).

It belongs to the RecO family.

In terms of biological role, involved in DNA repair and RecF pathway recombination. The sequence is that of DNA repair protein RecO from Sinorhizobium medicae (strain WSM419) (Ensifer medicae).